Consider the following 305-residue polypeptide: NAD-dependent protein deacylase SIR4 (305 aa).

A mitochondrion-targeting transit peptide spans methionine 1–valine 10. Residues methionine 11–arginine 305 enclose the Deacetylase sirtuin-type domain. Residues glycine 37–serine 57 and glutamine 118–aspartate 121 each bind NAD(+). Histidine 139 functions as the Proton acceptor in the catalytic mechanism. Zn(2+) is bound by residues cysteine 147, cysteine 150, cysteine 209, and cysteine 212. NAD(+) is bound by residues glycine 249–serine 251, asparagine 275–glycine 277, and serine 293.

The protein belongs to the sirtuin family. Class II subfamily. Requires Zn(2+) as cofactor.

It is found in the mitochondrion matrix. The catalysed reaction is N(6)-acetyl-L-lysyl-[protein] + NAD(+) + H2O = 2''-O-acetyl-ADP-D-ribose + nicotinamide + L-lysyl-[protein]. Functionally, NAD-dependent protein deacylase. Catalyzes the NAD-dependent hydrolysis of acyl groups from lysine residues. This is NAD-dependent protein deacylase SIR4 from Batrachochytrium dendrobatidis (strain JAM81 / FGSC 10211) (Frog chytrid fungus).